The sequence spans 446 residues: MSIDTIVAIATPPGRGGVGIVRISGPKAYAIALCLNGNKALQPRLATFCSLYKGNNEVLDQGLVLYFKGPHSFTGEDIIEIQAHGSPVVLDLLIKESIAAGARLARPGEFSERAFLNDKIDLIQAEAIADLIQASSDTAARMALKSLQGDFSKKINQLNEELIYLRMYVEAAIDFPEEEIDFLNDGNVSQLLQRIIGRLEEIRSQANQGVLLREGLSLVIAGRPNAGKSTLINNLAGRDVAIVTEIAGTTRDIMREHILLDDIPLHIIDTAGLRDSDDLVEKEGIKRAWQELKRADCVLLVVDINNRDQQNSLLNELRLTLPNKIPIITVYNKIDTTKLTAKCDEHTVYLSAKTGEGLDELKKVIKQVVGYQPTEGQFLARRRHLQALDEAKALLLTGQSQLTNHKAGELLAEDLRLAHQTLCEITGEFTSDDLLGKIFSSFCIGK.

(6S)-5-formyl-5,6,7,8-tetrahydrofolate-binding residues include Arg-22, Glu-80, and Lys-119. One can recognise a TrmE-type G domain in the interval Gly-215 to Gly-370. Asn-225 lines the K(+) pocket. GTP contacts are provided by residues Asn-225–Thr-230, Thr-244–Thr-250, and Asp-269–Gly-272. Residue Ser-229 participates in Mg(2+) binding. Positions 244, 246, and 249 each coordinate K(+). A Mg(2+)-binding site is contributed by Thr-250. Lys-446 serves as a coordination point for (6S)-5-formyl-5,6,7,8-tetrahydrofolate.

Belongs to the TRAFAC class TrmE-Era-EngA-EngB-Septin-like GTPase superfamily. TrmE GTPase family. As to quaternary structure, homodimer. Heterotetramer of two MnmE and two MnmG subunits. K(+) serves as cofactor.

It is found in the cytoplasm. In terms of biological role, exhibits a very high intrinsic GTPase hydrolysis rate. Involved in the addition of a carboxymethylaminomethyl (cmnm) group at the wobble position (U34) of certain tRNAs, forming tRNA-cmnm(5)s(2)U34. The protein is tRNA modification GTPase MnmE of Legionella pneumophila (strain Paris).